A 298-amino-acid chain; its full sequence is Probable endonuclease 4 (298 aa).

Positions 69, 111, 146, 180, 183, 215, 228, 230, and 260 each coordinate Zn(2+).

This sequence belongs to the AP endonuclease 2 family. Zn(2+) is required as a cofactor.

It carries out the reaction Endonucleolytic cleavage to 5'-phosphooligonucleotide end-products.. Endonuclease IV plays a role in DNA repair. It cleaves phosphodiester bonds at apurinic or apyrimidinic (AP) sites, generating a 3'-hydroxyl group and a 5'-terminal sugar phosphate. The sequence is that of Probable endonuclease 4 from Bacillus cereus (strain AH187).